A 571-amino-acid chain; its full sequence is Urease subunit alpha (571 aa).

The Urease domain maps to 133–571; the sequence is GGIDTHVHFV…LPLTQRYFLF (439 aa). Ni(2+)-binding residues include histidine 138, histidine 140, and lysine 221. Residue lysine 221 is modified to N6-carboxylysine. Residue histidine 223 coordinates substrate. Ni(2+) is bound by residues histidine 250 and histidine 276. Histidine 324 functions as the Proton donor in the catalytic mechanism. A Ni(2+)-binding site is contributed by aspartate 364.

It belongs to the metallo-dependent hydrolases superfamily. Urease alpha subunit family. As to quaternary structure, heterotrimer of UreA (gamma), UreB (beta) and UreC (alpha) subunits. Three heterotrimers associate to form the active enzyme. Ni cation is required as a cofactor. Carboxylation allows a single lysine to coordinate two nickel ions.

The protein localises to the cytoplasm. It carries out the reaction urea + 2 H2O + H(+) = hydrogencarbonate + 2 NH4(+). It participates in nitrogen metabolism; urea degradation; CO(2) and NH(3) from urea (urease route): step 1/1. The chain is Urease subunit alpha from Staphylococcus xylosus.